A 147-amino-acid polypeptide reads, in one-letter code: Large ribosomal subunit protein mL40 (147 aa).

The N-terminal 26 residues, 1–26, are a transit peptide targeting the mitochondrion; it reads MLAQTFKKPHRAVLEQVSGTTVFIRN.

Belongs to the mitochondrion-specific ribosomal protein mL40 family. Component of the mitochondrial large ribosomal subunit (mt-LSU). Mature yeast 74S mitochondrial ribosomes consist of a small (37S) and a large (54S) subunit. The 37S small subunit contains a 15S ribosomal RNA (15S mt-rRNA) and 34 different proteins. The 54S large subunit contains a 21S rRNA (21S mt-rRNA) and 46 different proteins.

It is found in the mitochondrion. In terms of biological role, component of the mitochondrial ribosome (mitoribosome), a dedicated translation machinery responsible for the synthesis of mitochondrial genome-encoded proteins, including at least some of the essential transmembrane subunits of the mitochondrial respiratory chain. The mitoribosomes are attached to the mitochondrial inner membrane and translation products are cotranslationally integrated into the membrane. The protein is Large ribosomal subunit protein mL40 (MRPL28) of Saccharomyces cerevisiae (strain ATCC 204508 / S288c) (Baker's yeast).